Reading from the N-terminus, the 477-residue chain is Cysteine--tRNA ligase (477 aa).

C30 serves as a coordination point for Zn(2+). The 'HIGH' region signature appears at 32–42; the sequence is PTVYDYNHIGH. Zn(2+) is bound by residues C209, H234, and E238. A 'KMSKS' region motif is present at residues 267–271; sequence KMSKS. Residue K270 participates in ATP binding.

This sequence belongs to the class-I aminoacyl-tRNA synthetase family. It depends on Zn(2+) as a cofactor.

It is found in the cytoplasm. The catalysed reaction is tRNA(Cys) + L-cysteine + ATP = L-cysteinyl-tRNA(Cys) + AMP + diphosphate. In Staphylothermus marinus (strain ATCC 43588 / DSM 3639 / JCM 9404 / F1), this protein is Cysteine--tRNA ligase.